Here is a 129-residue protein sequence, read N- to C-terminus: Small ribosomal subunit protein uS11 (129 aa).

The protein belongs to the universal ribosomal protein uS11 family. In terms of assembly, part of the 30S ribosomal subunit. Interacts with proteins S7 and S18. Binds to IF-3.

Located on the platform of the 30S subunit, it bridges several disparate RNA helices of the 16S rRNA. Forms part of the Shine-Dalgarno cleft in the 70S ribosome. The sequence is that of Small ribosomal subunit protein uS11 from Synechococcus sp. (strain RCC307).